A 140-amino-acid chain; its full sequence is Profilin (140 aa).

The protein belongs to the profilin family. Occurs in many kinds of cells as a complex with monomeric actin in a 1:1 ratio.

Functionally, binds to actin and affects the structure of the cytoskeleton. At high concentrations, profilin prevents the polymerization of actin, whereas it enhances it at low concentrations. By binding to PIP2, it inhibits the formation of IP3 and DG. The chain is Profilin from Suberites domuncula (Sponge).